A 367-amino-acid chain; its full sequence is Mitochondrial distribution and morphology protein 34 (367 aa).

Residues M1–Q197 enclose the SMP-LTD domain. Disordered regions lie at residues Q267–S311 and P347–S367. Residues F286–A302 show a composition bias toward polar residues.

It belongs to the MDM34 family. As to quaternary structure, component of the ER-mitochondria encounter structure (ERMES) or MDM complex, composed of MMM1, MDM10, MDM12 and MDM34.

Its subcellular location is the mitochondrion outer membrane. Component of the ERMES/MDM complex, which serves as a molecular tether to connect the endoplasmic reticulum (ER) and mitochondria. Components of this complex are involved in the control of mitochondrial shape and protein biogenesis, and function in nonvesicular lipid trafficking between the ER and mitochondria. MDM34 is required for the interaction of the ER-resident membrane protein MMM1 and the outer mitochondrial membrane-resident beta-barrel protein MDM10. The protein is Mitochondrial distribution and morphology protein 34 of Malassezia globosa (strain ATCC MYA-4612 / CBS 7966) (Dandruff-associated fungus).